Reading from the N-terminus, the 71-residue chain is Cell division protein FtsB (71 aa).

Residues 1 to 3 are Cytoplasmic-facing; it reads MKI. A helical transmembrane segment spans residues 4–21; the sequence is LKIFLLSLLFWLQYSLWF. The Extracellular segment spans residues 22–71; it reads GKNGVLDFIKIYRRVTIEKKNNEYLDMRNNQIILEIENFNNHINKDKKKT.

Belongs to the FtsB family.

Its subcellular location is the cell membrane. Its function is as follows. Essential cell division protein. May link together the upstream cell division proteins, which are predominantly cytoplasmic, with the downstream cell division proteins, which are predominantly extracellular. In Buchnera aphidicola subsp. Acyrthosiphon pisum (strain APS) (Acyrthosiphon pisum symbiotic bacterium), this protein is Cell division protein FtsB.